The following is a 164-amino-acid chain: 4-hydroxy-4-methyl-2-oxoglutarate aldolase (164 aa).

Substrate is bound by residues 74–77 and arginine 96; that span reads GGNL. An a divalent metal cation-binding site is contributed by aspartate 97.

The protein belongs to the class II aldolase/RraA-like family. In terms of assembly, homotrimer. Ni(2+) is required as a cofactor. Co(2+) serves as cofactor. The cofactor is Zn(2+).

It catalyses the reaction 4-hydroxy-4-methyl-2-oxoglutarate = 2 pyruvate. It carries out the reaction oxaloacetate + H(+) = pyruvate + CO2. With respect to regulation, competitively inhibited by oxalate, a pyruvate enolate analog. Functionally, catalyzes the aldol cleavage of 4-hydroxy-4-methyl-2-oxoglutarate (HMG) into 2 molecules of pyruvate. Also contains a secondary oxaloacetate (OAA) decarboxylase activity due to the common pyruvate enolate transition state formed following C-C bond cleavage in the retro-aldol and decarboxylation reactions. The sequence is that of 4-hydroxy-4-methyl-2-oxoglutarate aldolase from Thermus thermophilus (strain ATCC 27634 / DSM 579 / HB8).